A 292-amino-acid polypeptide reads, in one-letter code: mRNA export protein 33 (292 aa).

Residues 1-76 are disordered; it reads MPPKKAAKGK…RKRREEEKRA (76 aa). Basic and acidic residues-rich tracts occupy residues 9 to 26 and 58 to 76; these read GKGDPGKAAKKDPTKKAA and KDAKRQEALRKRREEEKRA. Residues 134–172 form a C3H1-type zinc finger; it reads INTDIVCKFFLEACETGKYGWLWQCPNGNMTCIYKHALP.

It localises to the cytoplasm. In terms of biological role, functions as a component of the nuclear pore complex (NPC). NPC components, collectively referred to as nucleoporins (NUPs), can play the role of both NPC structural components and of docking or interaction partners for transiently associated nuclear transport factors. Active directional transport is assured by both, a Phe-Gly (FG) repeat affinity gradient for these transport factors across the NPC and a transport cofactor concentration gradient across the nuclear envelope. Involved in the export of mRNA from the nucleus to the cytoplasm. May play a role in mitotic spindle formation and/or function. The polypeptide is mRNA export protein 33 (mep33) (Schizosaccharomyces pombe (strain 972 / ATCC 24843) (Fission yeast)).